A 254-amino-acid chain; its full sequence is Alcohol dehydrogenase (254 aa).

10–33 (FVAGLGGIGLDTSREIVKSGPKNL) is an NAD(+) binding site. Ser-138 is a binding site for substrate. Tyr-151 functions as the Proton acceptor in the catalytic mechanism.

This sequence belongs to the short-chain dehydrogenases/reductases (SDR) family. Homodimer.

The enzyme catalyses a primary alcohol + NAD(+) = an aldehyde + NADH + H(+). The catalysed reaction is a secondary alcohol + NAD(+) = a ketone + NADH + H(+). The polypeptide is Alcohol dehydrogenase (Adh) (Drosophila heteroneura (Fruit fly)).